Consider the following 148-residue polypeptide: Large-conductance mechanosensitive channel (148 aa).

The next 2 membrane-spanning stretches (helical) occupy residues 12-32 (AFAMKGNVIDMAVGVVIGGAF) and 85-105 (GQFLQATFDFLIIAFAIFLFI).

Belongs to the MscL family. As to quaternary structure, homopentamer.

Its subcellular location is the cell inner membrane. In terms of biological role, channel that opens in response to stretch forces in the membrane lipid bilayer. May participate in the regulation of osmotic pressure changes within the cell. This Bacteroides thetaiotaomicron (strain ATCC 29148 / DSM 2079 / JCM 5827 / CCUG 10774 / NCTC 10582 / VPI-5482 / E50) protein is Large-conductance mechanosensitive channel.